The sequence spans 319 residues: Thioredoxin reductase 1 (319 aa).

FAD is bound by residues 11-14 (SGPA), 40-41 (IA), Gln45, Asn54, Val87, Cys145, Asp288, and 295-297 (RQA). Cys142 and Cys145 are disulfide-bonded. At Ser303 the chain carries Phosphoserine.

The protein belongs to the class-II pyridine nucleotide-disulfide oxidoreductase family. In terms of assembly, homodimer. It depends on FAD as a cofactor.

It is found in the cytoplasm. The protein localises to the mitochondrion intermembrane space. It catalyses the reaction [thioredoxin]-dithiol + NADP(+) = [thioredoxin]-disulfide + NADPH + H(+). Functionally, central component in the thioredoxin system. Reduces thioredoxins 1 and 2. The sequence is that of Thioredoxin reductase 1 (TRR1) from Saccharomyces cerevisiae (strain ATCC 204508 / S288c) (Baker's yeast).